A 138-amino-acid chain; its full sequence is Large ribosomal subunit protein uL16 (138 aa).

Positions Met-1–Gly-15 are enriched in basic residues. A disordered region spans residues Met-1–Ala-21.

Belongs to the universal ribosomal protein uL16 family. As to quaternary structure, part of the 50S ribosomal subunit.

In terms of biological role, binds 23S rRNA and is also seen to make contacts with the A and possibly P site tRNAs. This Borrelia garinii subsp. bavariensis (strain ATCC BAA-2496 / DSM 23469 / PBi) (Borreliella bavariensis) protein is Large ribosomal subunit protein uL16.